We begin with the raw amino-acid sequence, 100 residues long: MEATSLLSEIRSLNIAYLRLARRLLATDQALATTALGISQSMGEALLTLDEEACVRMAQTNLFLCRIHFDDRVLAALLAGPRLELLESPASAGKAAPAIA.

The protein belongs to the FlhD family. As to quaternary structure, homodimer; disulfide-linked. Forms a heterohexamer composed of two FlhC and four FlhD subunits. Each FlhC binds a FlhD dimer, forming a heterotrimer, and a hexamer assembles by dimerization of two heterotrimers.

Its subcellular location is the cytoplasm. In terms of biological role, functions in complex with FlhC as a master transcriptional regulator that regulates transcription of several flagellar and non-flagellar operons by binding to their promoter region. Activates expression of class 2 flagellar genes, including fliA, which is a flagellum-specific sigma factor that turns on the class 3 genes. Also regulates genes whose products function in a variety of physiological pathways. This is Flagellar transcriptional regulator FlhD from Ralstonia pickettii (strain 12D).